Consider the following 419-residue polypeptide: Putative zinc metalloprotease SPs1691 (419 aa).

Residue H18 coordinates Zn(2+). The active site involves E19. Residue H22 coordinates Zn(2+). Transmembrane regions (helical) follow at residues 169-191, 301-323, 343-365, and 392-411; these read LITN…ILLV, LAWS…FSLN, LESV…LIPI, and AYIT…AVTW. The PDZ domain occupies 175-274; it reads GPMNNFILGI…LKTVAVKPQK (100 aa).

This sequence belongs to the peptidase M50B family. Zn(2+) is required as a cofactor.

It localises to the cell membrane. This chain is Putative zinc metalloprotease SPs1691 (eep), found in Streptococcus pyogenes serotype M3 (strain SSI-1).